A 931-amino-acid chain; its full sequence is Chitin synthase 7 (931 aa).

Disordered stretches follow at residues 1-34 and 56-92; these read MVRH…GHYR and GDVG…ASSS. Composition is skewed to polar residues over residues 7–28 and 83–92; these read FTNS…TPYP and PLTTGPASSS. N-linked (GlcNAc...) asparagine glycosylation occurs at N536. The next 3 helical transmembrane spans lie at 573–593, 615–635, and 647–667; these read IFSL…FSII, INLV…VLAL, and ILTL…SIIL. N691 carries an N-linked (GlcNAc...) asparagine glycan. Transmembrane regions (helical) follow at residues 695 to 715 and 725 to 745; these read GVLV…SFLY and FPQY…YAFC. Positions 763–789 are disordered; it reads LPAISSSKQKDGETAVVEEQQRSQGEL. Residue N819 is glycosylated (N-linked (GlcNAc...) asparagine). A helical membrane pass occupies residues 826–846; that stretch reads LVVVWLLTNAALAISIQTLNG. N-linked (GlcNAc...) asparagine glycosylation is found at N866 and N874. A helical membrane pass occupies residues 899–919; it reads AILWTTFALSMVRFIGCVFYW.

It belongs to the chitin synthase family. Class III subfamily.

Its subcellular location is the cell membrane. The enzyme catalyses [(1-&gt;4)-N-acetyl-beta-D-glucosaminyl](n) + UDP-N-acetyl-alpha-D-glucosamine = [(1-&gt;4)-N-acetyl-beta-D-glucosaminyl](n+1) + UDP + H(+). Its function is as follows. Polymerizes chitin, a structural polymer of the cell wall and septum, by transferring the sugar moiety of UDP-GlcNAc to the non-reducing end of the growing chitin polymer. The polypeptide is Chitin synthase 7 (Cryptococcus neoformans var. grubii serotype A (strain H99 / ATCC 208821 / CBS 10515 / FGSC 9487) (Filobasidiella neoformans var. grubii)).